The chain runs to 176 residues: MLLTTLVVGETAPSTTLGTMIVVSGAFLILMLLLKKYAWGAIVDILTQREEKIANDLDSAEQSRVAAAKMEKERQQQLLSSRSEAAEIIKNAKESGEQTRQKTLKETTAEVTRLREKARTDISQEREEALSSVKNEVADLSLQIAAKILNKELTPDAHEALIDSYIESLGKANETR.

A helical membrane pass occupies residues 14 to 34 (STTLGTMIVVSGAFLILMLLL).

The protein belongs to the ATPase B chain family. In terms of assembly, F-type ATPases have 2 components, F(1) - the catalytic core - and F(0) - the membrane proton channel. F(1) has five subunits: alpha(3), beta(3), gamma(1), delta(1), epsilon(1). F(0) has three main subunits: a(1), b(2) and c(10-14). The alpha and beta chains form an alternating ring which encloses part of the gamma chain. F(1) is attached to F(0) by a central stalk formed by the gamma and epsilon chains, while a peripheral stalk is formed by the delta and b chains.

It localises to the cell membrane. Its function is as follows. F(1)F(0) ATP synthase produces ATP from ADP in the presence of a proton or sodium gradient. F-type ATPases consist of two structural domains, F(1) containing the extramembraneous catalytic core and F(0) containing the membrane proton channel, linked together by a central stalk and a peripheral stalk. During catalysis, ATP synthesis in the catalytic domain of F(1) is coupled via a rotary mechanism of the central stalk subunits to proton translocation. Functionally, component of the F(0) channel, it forms part of the peripheral stalk, linking F(1) to F(0). In Enterococcus faecalis (strain ATCC 700802 / V583), this protein is ATP synthase subunit b.